The following is a 628-amino-acid chain: LRR receptor kinase SERK2 (628 aa).

The signal sequence occupies residues 1–31 (MAEARLLRRRRLCLAVPFVWVVAVAVSRVGA). LRR repeat units follow at residues 97–121 (LKNL…LGNL), 123–144 (NLVS…TLGQ), 145–169 (LYKL…LTNI), and 170–194 (TTLQ…SFSL). 6 N-linked (GlcNAc...) asparagine glycosylation sites follow: Asn109, Asn120, Asn133, Asn155, Asn168, and Asn181. A helical transmembrane segment spans residues 243 to 263 (AIAGGVAAAAALLFAVPAIGF). Thr303 bears the Phosphothreonine mark. A Protein kinase domain is found at 306-593 (FSNKNILGRG…GLAERWEEWQ (288 aa)). 312-320 (LGRGGFGKV) provides a ligand contact to ATP. A Phosphoserine modification is found at Ser329. Lys334 contacts ATP. The residue at position 350 (Thr350) is a Phosphothreonine. 2 positions are modified to phosphoserine: Ser356 and Ser387. Residue Asp433 is the Proton acceptor of the active site. Residues Thr463, Thr466, and Thr472 each carry the phosphothreonine modification. Phosphoserine is present on Ser615. Thr616 carries the phosphothreonine modification. Residue Ser625 is modified to Phosphoserine.

Belongs to the protein kinase superfamily. Ser/Thr protein kinase family. In terms of assembly, interacts with BRI1. Interacts with XA21, XA26/XA3 and FLS2. Autophosphorylated on serine and threonine residues. Expressed in flag leaves. Expressed in roots, shoot apex, leaf blades, leaf sheaths, panicles and flowers. Expressed leaves, stems, sheaths and flowers.

It localises to the cell membrane. It carries out the reaction L-seryl-[protein] + ATP = O-phospho-L-seryl-[protein] + ADP + H(+). The enzyme catalyses L-threonyl-[protein] + ATP = O-phospho-L-threonyl-[protein] + ADP + H(+). Functionally, LRR receptor kinase involved in positive regulation of somatic embryogenesis and defense response against the rice blast fungus pathogen Magnaporthe oryzae. Involved in the positive regulation of receptor kinase-mediated immunity. Required for immunity mediated by the LRR receptor kinases XA21 and XA26/XA3 which recognize effectors from the bacterial pathogen Xanthomonas oryzae pv. oryzae (Xoo). Required for the immune response mediated by the LRR receptor kinase FLS2 which recognizes specifically the bacterial flagellin (flg22) effector. Kinase activity and direct interaction with the immune receptors is critical for their function. Involved in the regulation of plant growth through the brassinosteroid (BR) signaling pathway. The protein is LRR receptor kinase SERK2 of Oryza sativa subsp. japonica (Rice).